An 831-amino-acid chain; its full sequence is Protein ADP-ribosyltransferase PARP3 (831 aa).

Residues methionine 1–leucine 69 are disordered. Basic and acidic residues-rich tracts occupy residues glutamate 15–glutamate 32 and lysine 43–glutamate 66. A PADR1 zinc-binding domain is found at glutamate 49–aspartate 199. Residues glycine 124–proline 168 form a zinc ribbon region. The Zn(2+) site is built by cysteine 129, cysteine 132, cysteine 145, and cysteine 155. The 91-residue stretch at glutamate 200–isoleucine 290 folds into the BRCT domain. The WGR domain maps to glycine 338–methionine 439. One can recognise a PARP alpha-helical domain in the interval histidine 466 to glycine 585. Residues aspartate 594–valine 827 form the PARP catalytic domain.

It belongs to the ARTD/PARP family.

The protein resides in the nucleus. The enzyme catalyses L-aspartyl-[protein] + NAD(+) = 4-O-(ADP-D-ribosyl)-L-aspartyl-[protein] + nicotinamide. The catalysed reaction is L-glutamyl-[protein] + NAD(+) = 5-O-(ADP-D-ribosyl)-L-glutamyl-[protein] + nicotinamide. Its function is as follows. Involved in the base excision repair (BER) pathway, by catalyzing the poly(ADP-ribosyl)ation of a limited number of acceptor proteins involved in chromatin architecture and in DNA metabolism. This modification follows DNA damages and appears as an obligatory step in a detection/signaling pathway leading to the reparation of DNA strand breaks. In Oryza sativa subsp. japonica (Rice), this protein is Protein ADP-ribosyltransferase PARP3 (PARP3).